The primary structure comprises 326 residues: Beta-ketoacyl-[acyl-carrier-protein] synthase III (326 aa).

Catalysis depends on residues Cys112 and His251. Residues 252-256 are ACP-binding; that stretch reads QANSR. The active site involves Asn281.

It belongs to the thiolase-like superfamily. FabH family. Homodimer.

The protein resides in the cytoplasm. The enzyme catalyses malonyl-[ACP] + acetyl-CoA + H(+) = 3-oxobutanoyl-[ACP] + CO2 + CoA. It participates in lipid metabolism; fatty acid biosynthesis. Its function is as follows. Catalyzes the condensation reaction of fatty acid synthesis by the addition to an acyl acceptor of two carbons from malonyl-ACP. Catalyzes the first condensation reaction which initiates fatty acid synthesis and may therefore play a role in governing the total rate of fatty acid production. Possesses both acetoacetyl-ACP synthase and acetyl transacylase activities. Its substrate specificity determines the biosynthesis of branched-chain and/or straight-chain of fatty acids. This chain is Beta-ketoacyl-[acyl-carrier-protein] synthase III, found in Clostridium botulinum (strain Kyoto / Type A2).